The following is a 276-amino-acid chain: Formamidopyrimidine-DNA glycosylase (276 aa).

Catalysis depends on Pro2, which acts as the Schiff-base intermediate with DNA. The active-site Proton donor is Glu3. The active-site Proton donor; for beta-elimination activity is the Lys60. DNA is bound by residues His93 and Arg112. The FPG-type zinc finger occupies 240–274 (NVYGKKGEPCVTCGTILEKTVVGGRGTHYCPICQP). Arg264 serves as the catalytic Proton donor; for delta-elimination activity.

It belongs to the FPG family. Monomer. Requires Zn(2+) as cofactor.

It carries out the reaction Hydrolysis of DNA containing ring-opened 7-methylguanine residues, releasing 2,6-diamino-4-hydroxy-5-(N-methyl)formamidopyrimidine.. It catalyses the reaction 2'-deoxyribonucleotide-(2'-deoxyribose 5'-phosphate)-2'-deoxyribonucleotide-DNA = a 3'-end 2'-deoxyribonucleotide-(2,3-dehydro-2,3-deoxyribose 5'-phosphate)-DNA + a 5'-end 5'-phospho-2'-deoxyribonucleoside-DNA + H(+). Its function is as follows. Involved in base excision repair of DNA damaged by oxidation or by mutagenic agents. Acts as a DNA glycosylase that recognizes and removes damaged bases. Has a preference for oxidized purines, such as 7,8-dihydro-8-oxoguanine (8-oxoG). Has AP (apurinic/apyrimidinic) lyase activity and introduces nicks in the DNA strand. Cleaves the DNA backbone by beta-delta elimination to generate a single-strand break at the site of the removed base with both 3'- and 5'-phosphates. The protein is Formamidopyrimidine-DNA glycosylase of Bacillus anthracis.